The primary structure comprises 524 residues: Cytochrome P450 monooxygenase ankB (524 aa).

A helical transmembrane segment spans residues phenylalanine 22 to phenylalanine 42. Cysteine 466 contacts heme.

The protein belongs to the cytochrome P450 family. The cofactor is heme.

The protein localises to the membrane. The catalysed reaction is cyclo(L-arginyl-tyrosyl) + reduced [NADPH--hemoprotein reductase] + O2 = cyclo(L-arginyl-L-dehydrotyrosyl) + oxidized [NADPH--hemoprotein reductase] + 2 H2O + H(+). It functions in the pathway alkaloid biosynthesis. In terms of biological role, cytochrome P450 monooxygenase; part of the ank cluster that mediates the biosynthesis of NK13650 C, a highly modified cyclo-arginine-tyrosine dipeptide. AnkB is responsible for desaturation of the ankA product cyclo-Arg-Tyr diketopiperazine, likely through hydroxylation of the benzylic position followed by dehydration to yield a dehydro-cyclodipeptide. Within the pathway, the cyclodipeptide synthase ankA acts as the scaffold-generating enzyme and is responsible for formation of the cyclo-Arg-Tyr diketopiperazine (cRY) from L-Arg and L-Tyr. The ankA product cRY is desaturated by the cytochrome P450 monooxygenase ankB to yield a dehydro-cyclodipeptide intermediate. The FAD-dependent monooxygenase ankC then installs the m-OH, ankD catalyzes the attachment of L-homoserine, and ankE ligates citrate to the ankD product to yield NK13650 B. The O-methyltransferase ankF is responsible for methylation of the C-17 phenol group of NK13650 B to produce NK13650 D. Amidation of NK13650 D with L-Asp by ankG then leads to the production of NK13650 C, whereas amidation of NK13650 B produces NK13650 A. This chain is Cytochrome P450 monooxygenase ankB, found in Aspergillus thermomutatus (Neosartorya pseudofischeri).